The following is a 259-amino-acid chain: Small ribosomal subunit protein eS1 (259 aa).

Ala2 is subject to N-acetylalanine; partial.

This sequence belongs to the eukaryotic ribosomal protein eS1 family. As to quaternary structure, component of the small ribosomal subunit. Mature ribosomes consist of a small (40S) and a large (60S) subunit. The 40S subunit contains about 33 different proteins and 1 molecule of RNA (18S). The 60S subunit contains about 49 different proteins and 3 molecules of RNA (25S, 5.8S and 5S).

It localises to the cytoplasm. The chain is Small ribosomal subunit protein eS1 from Cryptococcus neoformans var. neoformans serotype D (strain B-3501A) (Filobasidiella neoformans).